The primary structure comprises 149 residues: Transcription antitermination protein NusB (149 aa).

The protein belongs to the NusB family.

Its function is as follows. Involved in transcription antitermination. Required for transcription of ribosomal RNA (rRNA) genes. Binds specifically to the boxA antiterminator sequence of the ribosomal RNA (rrn) operons. The chain is Transcription antitermination protein NusB from Hahella chejuensis (strain KCTC 2396).